Reading from the N-terminus, the 187-residue chain is ATP synthase subunit b 2 (187 aa).

Residues 1–25 (MAESHGGAKGPAAGAHTGAEGGHGG) are disordered. The helical transmembrane segment at 39–59 (LVSLAIFFVVLYVIVSKLALP) threads the bilayer. The disordered stretch occupies residues 103–122 (RAQAIGNESRDKANAQAETE). Over residues 110–122 (ESRDKANAQAETE) the composition is skewed to basic and acidic residues.

It belongs to the ATPase B chain family. As to quaternary structure, F-type ATPases have 2 components, F(1) - the catalytic core - and F(0) - the membrane proton channel. F(1) has five subunits: alpha(3), beta(3), gamma(1), delta(1), epsilon(1). F(0) has three main subunits: a(1), b(2) and c(10-14). The alpha and beta chains form an alternating ring which encloses part of the gamma chain. F(1) is attached to F(0) by a central stalk formed by the gamma and epsilon chains, while a peripheral stalk is formed by the delta and b chains.

Its subcellular location is the cell inner membrane. In terms of biological role, f(1)F(0) ATP synthase produces ATP from ADP in the presence of a proton or sodium gradient. F-type ATPases consist of two structural domains, F(1) containing the extramembraneous catalytic core and F(0) containing the membrane proton channel, linked together by a central stalk and a peripheral stalk. During catalysis, ATP synthesis in the catalytic domain of F(1) is coupled via a rotary mechanism of the central stalk subunits to proton translocation. Component of the F(0) channel, it forms part of the peripheral stalk, linking F(1) to F(0). The b'-subunit is a diverged and duplicated form of b found in plants and photosynthetic bacteria. This is ATP synthase subunit b 2 (atpF2) from Bradyrhizobium diazoefficiens (strain JCM 10833 / BCRC 13528 / IAM 13628 / NBRC 14792 / USDA 110).